The chain runs to 564 residues: Ovochymase-2 (564 aa).

The signal sequence occupies residues 1–22; that stretch reads MLISRNKLILLLGIVFFERGKS. The propeptide at 23–51 is activation peptide; it reads ATLSLPKAPSCGQSLVKVQPWNYFNIFSR. In terms of domain architecture, Peptidase S1 spans 52–299; it reads ILGGSQVEKG…VLPWIHEHIQ (248 aa). Residues C77 and C93 are joined by a disulfide bond. H92 serves as the catalytic Charge relay system. The N-linked (GlcNAc...) asparagine glycan is linked to N104. E119 provides a ligand contact to Ca(2+). D142 acts as the Charge relay system in catalysis. Intrachain disulfides connect C176–C246, C207–C225, C236–C265, C311–C341, and C365–C384. The active-site Charge relay system is S240. 2 consecutive CUB domains span residues 311-421 and 431-543; these read CSEQ…YKAL and CSYL…VSFI. N415 and N451 each carry an N-linked (GlcNAc...) asparagine glycan. Disulfide bonds link C431–C458 and C485–C506. N530 carries an N-linked (GlcNAc...) asparagine glycan.

Belongs to the peptidase S1 family.

The protein resides in the secreted. Functionally, may be required for sperm ADAM3 processing and consequential sperm fertilizing ability. In vitro, has an endopeptidase activity. The chain is Ovochymase-2 from Homo sapiens (Human).